The following is a 441-amino-acid chain: Pre-mRNA-splicing factor PRP46 (441 aa).

Disordered regions lie at residues 1–22 and 81–107; these read MPVA…NEPS and MGAS…LTNL. Over residues 83-107 the composition is skewed to polar residues; it reads ASSSALTKHTPSASQPTTHDSLTNL. 7 WD repeats span residues 130 to 169, 172 to 211, 214 to 253, 256 to 295, 298 to 336, 339 to 379, and 388 to 427; these read GHQG…LRLT, GHIM…VVRH, GHLS…PVVV, GHKS…TMTT, HHKK…LVLN, DQNA…QSTQ, and ESEN…TAES.

This sequence belongs to the WD repeat PRL1/PRL2 family. As to quaternary structure, associated with the spliceosome.

The protein localises to the cytoplasm. It localises to the nucleus. Its function is as follows. Involved in pre-mRNA splicing and required for cell cycle progression at G2/M. In Yarrowia lipolytica (strain CLIB 122 / E 150) (Yeast), this protein is Pre-mRNA-splicing factor PRP46 (PRP46).